The chain runs to 130 residues: Small ribosomal subunit protein uS9 (130 aa).

The protein belongs to the universal ribosomal protein uS9 family.

The protein is Small ribosomal subunit protein uS9 of Burkholderia cenocepacia (strain HI2424).